Reading from the N-terminus, the 105-residue chain is U-scoloptoxin(16)-Sm4a (105 aa).

An N-terminal signal peptide occupies residues 1-22 (MWALTVFVTILAAAIPITGVTG).

Belongs to the scoloptoxin-16 family. Post-translationally, contains 4 disulfide bonds. In terms of tissue distribution, expressed by the venom gland.

It is found in the secreted. The polypeptide is U-scoloptoxin(16)-Sm4a (Scolopendra morsitans (Tanzanian blue ringleg centipede)).